Consider the following 475-residue polypeptide: Cobyric acid synthase (475 aa).

The region spanning 244–431 (KLNVVVPVLT…LHGFFDEADV (188 aa)) is the GATase cobBQ-type domain. The active-site Nucleophile is Cys-325. His-423 is a catalytic residue.

It belongs to the CobB/CobQ family. CobQ subfamily.

The protein operates within cofactor biosynthesis; adenosylcobalamin biosynthesis. Its function is as follows. Catalyzes amidations at positions B, D, E, and G on adenosylcobyrinic A,C-diamide. NH(2) groups are provided by glutamine, and one molecule of ATP is hydrogenolyzed for each amidation. The chain is Cobyric acid synthase from Vibrio campbellii (strain ATCC BAA-1116).